Here is a 400-residue protein sequence, read N- to C-terminus: Nicotinate phosphoribosyltransferase (400 aa).

His-220 bears the Phosphohistidine; by autocatalysis mark.

It belongs to the NAPRTase family. Transiently phosphorylated on a His residue during the reaction cycle. Phosphorylation strongly increases the affinity for substrates and increases the rate of nicotinate D-ribonucleotide production. Dephosphorylation regenerates the low-affinity form of the enzyme, leading to product release.

The catalysed reaction is nicotinate + 5-phospho-alpha-D-ribose 1-diphosphate + ATP + H2O = nicotinate beta-D-ribonucleotide + ADP + phosphate + diphosphate. Its pathway is cofactor biosynthesis; NAD(+) biosynthesis; nicotinate D-ribonucleotide from nicotinate: step 1/1. Functionally, catalyzes the synthesis of beta-nicotinate D-ribonucleotide from nicotinate and 5-phospho-D-ribose 1-phosphate at the expense of ATP. The protein is Nicotinate phosphoribosyltransferase of Salmonella choleraesuis (strain SC-B67).